A 216-amino-acid polypeptide reads, in one-letter code: Pyrrolidone-carboxylate peptidase (216 aa).

Residues Glu80, Cys143, and His168 contribute to the active site.

The protein belongs to the peptidase C15 family. As to quaternary structure, homotetramer.

The protein localises to the cytoplasm. It carries out the reaction Release of an N-terminal pyroglutamyl group from a polypeptide, the second amino acid generally not being Pro.. Its function is as follows. Removes 5-oxoproline from various penultimate amino acid residues except L-proline. The protein is Pyrrolidone-carboxylate peptidase of Cupriavidus taiwanensis (strain DSM 17343 / BCRC 17206 / CCUG 44338 / CIP 107171 / LMG 19424 / R1) (Ralstonia taiwanensis (strain LMG 19424)).